Here is a 176-residue protein sequence, read N- to C-terminus: Inner membrane-spanning protein YciB (176 aa).

Transmembrane regions (helical) follow at residues 3–23, 24–44, 49–69, 72–92, 121–141, and 149–169; these read FLFD…WGIF, TATA…AFRH, TMLW…LVLH, KFIQ…LLAA, LAWA…VHNF, and FKLF…SLWL.

It belongs to the YciB family.

Its subcellular location is the cell inner membrane. Its function is as follows. Plays a role in cell envelope biogenesis, maintenance of cell envelope integrity and membrane homeostasis. In Burkholderia cenocepacia (strain ATCC BAA-245 / DSM 16553 / LMG 16656 / NCTC 13227 / J2315 / CF5610) (Burkholderia cepacia (strain J2315)), this protein is Inner membrane-spanning protein YciB.